The sequence spans 89 residues: Large ribosomal subunit protein bL27 (89 aa).

The segment at 1–23 (MAHKKAGGSSRNGRDSESKRLGV) is disordered.

Belongs to the bacterial ribosomal protein bL27 family.

The sequence is that of Large ribosomal subunit protein bL27 from Rhizobium meliloti (strain 1021) (Ensifer meliloti).